We begin with the raw amino-acid sequence, 244 residues long: rRNA adenine N-6-methyltransferase (244 aa).

S-adenosyl-L-methionine is bound by residues Asn-11, Ile-13, Gly-38, Glu-59, Asp-84, and Asn-101.

This sequence belongs to the class I-like SAM-binding methyltransferase superfamily. rRNA adenine N(6)-methyltransferase family.

It carries out the reaction adenosine(2085) in 23S rRNA + 2 S-adenosyl-L-methionine = N(6)-dimethyladenosine(2085) in 23S rRNA + 2 S-adenosyl-L-homocysteine + 2 H(+). Its function is as follows. This protein produces a dimethylation of the adenine residue at position 2085 in 23S rRNA, resulting in reduced affinity between ribosomes and macrolide-lincosamide-streptogramin B antibiotics. The sequence is that of rRNA adenine N-6-methyltransferase (ermC) from Staphylococcus aureus.